A 96-amino-acid polypeptide reads, in one-letter code: Aspartyl/glutamyl-tRNA(Asn/Gln) amidotransferase subunit C (96 aa).

Belongs to the GatC family. As to quaternary structure, heterotrimer of A, B and C subunits.

The catalysed reaction is L-glutamyl-tRNA(Gln) + L-glutamine + ATP + H2O = L-glutaminyl-tRNA(Gln) + L-glutamate + ADP + phosphate + H(+). It carries out the reaction L-aspartyl-tRNA(Asn) + L-glutamine + ATP + H2O = L-asparaginyl-tRNA(Asn) + L-glutamate + ADP + phosphate + 2 H(+). In terms of biological role, allows the formation of correctly charged Asn-tRNA(Asn) or Gln-tRNA(Gln) through the transamidation of misacylated Asp-tRNA(Asn) or Glu-tRNA(Gln) in organisms which lack either or both of asparaginyl-tRNA or glutaminyl-tRNA synthetases. The reaction takes place in the presence of glutamine and ATP through an activated phospho-Asp-tRNA(Asn) or phospho-Glu-tRNA(Gln). The chain is Aspartyl/glutamyl-tRNA(Asn/Gln) amidotransferase subunit C from Symbiobacterium thermophilum (strain DSM 24528 / JCM 14929 / IAM 14863 / T).